The primary structure comprises 130 residues: Small ribosomal subunit protein uS11 (130 aa).

This sequence belongs to the universal ribosomal protein uS11 family. In terms of assembly, part of the 30S ribosomal subunit. Interacts with proteins S7 and S18. Binds to IF-3.

Located on the platform of the 30S subunit, it bridges several disparate RNA helices of the 16S rRNA. Forms part of the Shine-Dalgarno cleft in the 70S ribosome. This Borreliella afzelii (strain PKo) (Borrelia afzelii) protein is Small ribosomal subunit protein uS11.